The sequence spans 135 residues: HVA22-like protein d (135 aa).

Transmembrane regions (helical) follow at residues 11-31, 42-62, and 63-83; these read LHSG…SVIA, QWLA…ILQS, and LIEW…WLVL.

Belongs to the DP1 family. As to expression, predominantly expressed in flower buds.

Its subcellular location is the membrane. The chain is HVA22-like protein d (HVA22D) from Arabidopsis thaliana (Mouse-ear cress).